We begin with the raw amino-acid sequence, 389 residues long: Tryptophan synthase beta chain (389 aa).

Lys-84 is modified (N6-(pyridoxal phosphate)lysine).

The protein belongs to the TrpB family. In terms of assembly, tetramer of two alpha and two beta chains. Pyridoxal 5'-phosphate serves as cofactor.

The catalysed reaction is (1S,2R)-1-C-(indol-3-yl)glycerol 3-phosphate + L-serine = D-glyceraldehyde 3-phosphate + L-tryptophan + H2O. The protein operates within amino-acid biosynthesis; L-tryptophan biosynthesis; L-tryptophan from chorismate: step 5/5. The beta subunit is responsible for the synthesis of L-tryptophan from indole and L-serine. This chain is Tryptophan synthase beta chain, found in Clostridium novyi (strain NT).